Here is a 661-residue protein sequence, read N- to C-terminus: Putative lipase ATG15 (661 aa).

Topologically, residues 1–3 (MIW) are cytoplasmic. Residues 4-24 (NGRLVLACVLLIAGCSGQVDA) traverse the membrane as a helical; Signal-anchor for type II membrane protein segment. The Lumenal portion of the chain corresponds to 25 to 661 (ARTREQRKAF…FDDFDPKNDL (637 aa)). N155, N190, N212, N271, and N295 each carry an N-linked (GlcNAc...) asparagine glycan. Residue S311 is the Charge relay system of the active site. N457 is a glycosylation site (N-linked (GlcNAc...) asparagine). Disordered regions lie at residues 492–559 (ESTT…TSTS) and 574–597 (TTTSATPKPSSTARTVTKTKTTTS). Low complexity-rich tracts occupy residues 493 to 513 (STTSAPTTSTSTSSSTSSTRT), 527 to 559 (TTTSSSSSISSPSATPAPTITTTSSLPTSTSTS), and 574 to 595 (TTTSATPKPSSTARTVTKTKTT).

This sequence belongs to the AB hydrolase superfamily. Lipase family. Binds to both phosphatidylinositol (PI) and phosphatidylinositol 3,5-bisphosphate (PIP2).

The protein localises to the endosome. The protein resides in the multivesicular body membrane. Its subcellular location is the prevacuolar compartment membrane. The enzyme catalyses a triacylglycerol + H2O = a diacylglycerol + a fatty acid + H(+). Functionally, lipase which is essential for lysis of subvacuolar cytoplasm to vacuole targeted bodies and intravacuolar autophagic bodies. Involved in the lysis of intravacuolar multivesicular body (MVB) vesicles. The intravacuolar membrane disintegration by ATG15 is critical to life span extension. The protein is Putative lipase ATG15 (ATG15) of Passalora fulva (Tomato leaf mold).